The primary structure comprises 77 residues: U14-theraphotoxin-Cg1a 3 (77 aa).

Positions 1–21 (MKTSVLLVILGIAAITVQCTA) are cleaved as a signal peptide. Residues 22 to 49 (SESVEQDSLRTFVDTVLGWNAEMASEAR) constitute a propeptide that is removed on maturation. 3 disulfide bridges follow: cysteine 50/cysteine 64, cysteine 57/cysteine 69, and cysteine 63/cysteine 75. Lysine 77 is modified (lysine amide).

It belongs to the neurotoxin 10 (Hwtx-1) family. 65 (Jztx-21) subfamily. Expressed by the venom gland.

The protein localises to the secreted. In terms of biological role, probable ion channel inhibitor. In Chilobrachys guangxiensis (Chinese earth tiger tarantula), this protein is U14-theraphotoxin-Cg1a 3.